The following is a 339-amino-acid chain: Glyceraldehyde-3-phosphate dehydrogenase (339 aa).

Residues 12 to 13 (RI), Asp34, and Lys79 contribute to the NAD(+) site. Residues 150-152 (SCT), Thr181, 210-211 (TG), and Arg233 each bind D-glyceraldehyde 3-phosphate. The active-site Nucleophile is Cys151. Asn316 provides a ligand contact to NAD(+).

Belongs to the glyceraldehyde-3-phosphate dehydrogenase family. As to quaternary structure, homotetramer.

It is found in the cytoplasm. It catalyses the reaction D-glyceraldehyde 3-phosphate + phosphate + NAD(+) = (2R)-3-phospho-glyceroyl phosphate + NADH + H(+). The protein operates within carbohydrate degradation; glycolysis; pyruvate from D-glyceraldehyde 3-phosphate: step 1/5. This chain is Glyceraldehyde-3-phosphate dehydrogenase (GPD), found in Cryptococcus neoformans var. neoformans serotype D (strain B-3501A) (Filobasidiella neoformans).